Here is an 89-residue protein sequence, read N- to C-terminus: Small ribosomal subunit protein uS15 (89 aa).

This sequence belongs to the universal ribosomal protein uS15 family. In terms of assembly, part of the 30S ribosomal subunit. Forms a bridge to the 50S subunit in the 70S ribosome, contacting the 23S rRNA.

Its function is as follows. One of the primary rRNA binding proteins, it binds directly to 16S rRNA where it helps nucleate assembly of the platform of the 30S subunit by binding and bridging several RNA helices of the 16S rRNA. In terms of biological role, forms an intersubunit bridge (bridge B4) with the 23S rRNA of the 50S subunit in the ribosome. In Chlorobium phaeobacteroides (strain BS1), this protein is Small ribosomal subunit protein uS15.